The sequence spans 156 residues: 6,7-dimethyl-8-ribityllumazine synthase (156 aa).

5-amino-6-(D-ribitylamino)uracil is bound by residues W28, 60 to 62, and 82 to 84; these read SFE and VVV. 87 to 88 serves as a coordination point for (2S)-2-hydroxy-3-oxobutyl phosphate; that stretch reads GT. The active-site Proton donor is H90. A 5-amino-6-(D-ribitylamino)uracil-binding site is contributed by F115. Residue R129 coordinates (2S)-2-hydroxy-3-oxobutyl phosphate.

This sequence belongs to the DMRL synthase family.

The catalysed reaction is (2S)-2-hydroxy-3-oxobutyl phosphate + 5-amino-6-(D-ribitylamino)uracil = 6,7-dimethyl-8-(1-D-ribityl)lumazine + phosphate + 2 H2O + H(+). It participates in cofactor biosynthesis; riboflavin biosynthesis; riboflavin from 2-hydroxy-3-oxobutyl phosphate and 5-amino-6-(D-ribitylamino)uracil: step 1/2. Its function is as follows. Catalyzes the formation of 6,7-dimethyl-8-ribityllumazine by condensation of 5-amino-6-(D-ribitylamino)uracil with 3,4-dihydroxy-2-butanone 4-phosphate. This is the penultimate step in the biosynthesis of riboflavin. This is 6,7-dimethyl-8-ribityllumazine synthase from Kocuria rhizophila (strain ATCC 9341 / DSM 348 / NBRC 103217 / DC2201).